The chain runs to 167 residues: Peptidyl-prolyl cis-trans isomerase-like 3 (167 aa).

Residues 1–153 enclose the PPIase cyclophilin-type domain; sequence MSVTLHTNLG…QEIKLLNVTV (153 aa).

The protein belongs to the cyclophilin-type PPIase family. PPIL3 subfamily.

The catalysed reaction is [protein]-peptidylproline (omega=180) = [protein]-peptidylproline (omega=0). Functionally, PPIases accelerate the folding of proteins. It catalyzes the cis-trans isomerization of proline imidic peptide bonds in oligopeptides. The protein is Peptidyl-prolyl cis-trans isomerase-like 3 (CYP10) of Cryptococcus neoformans var. neoformans serotype D (strain B-3501A) (Filobasidiella neoformans).